The primary structure comprises 431 residues: Nuclear bridge Ish domain protein les1 (431 aa).

A signal peptide spans Met1 to Ser21.

The protein localises to the nucleus inner membrane. Its function is as follows. Inner nuclear envelope protein involved in nuclear fission, which is achieved via local disassembly of nuclear pores within the narrow bridge that links segregating daughter nuclei. Les1 restricts the process of local nuclear envelope breakdown to the bridge midzone to prevent the leakage of material from daughter nuclei during mitosis. The sequence is that of Nuclear bridge Ish domain protein les1 from Schizosaccharomyces pombe (strain 972 / ATCC 24843) (Fission yeast).